Reading from the N-terminus, the 134-residue chain is Holo-[acyl-carrier-protein] synthase (134 aa).

Mg(2+) contacts are provided by Asp8 and Glu57.

It belongs to the P-Pant transferase superfamily. AcpS family. Mg(2+) is required as a cofactor.

Its subcellular location is the cytoplasm. It carries out the reaction apo-[ACP] + CoA = holo-[ACP] + adenosine 3',5'-bisphosphate + H(+). Its function is as follows. Transfers the 4'-phosphopantetheine moiety from coenzyme A to a Ser of acyl-carrier-protein. The protein is Holo-[acyl-carrier-protein] synthase of Brucella abortus (strain S19).